The primary structure comprises 448 residues: Phosphoglucosamine mutase (448 aa).

The active-site Phosphoserine intermediate is Ser100. Ser100, Asp240, Asp242, and Asp244 together coordinate Mg(2+). Ser100 is subject to Phosphoserine.

It belongs to the phosphohexose mutase family. Mg(2+) is required as a cofactor. In terms of processing, activated by phosphorylation.

It catalyses the reaction alpha-D-glucosamine 1-phosphate = D-glucosamine 6-phosphate. In terms of biological role, catalyzes the conversion of glucosamine-6-phosphate to glucosamine-1-phosphate. In Bacillus cytotoxicus (strain DSM 22905 / CIP 110041 / 391-98 / NVH 391-98), this protein is Phosphoglucosamine mutase.